Here is a 274-residue protein sequence, read N- to C-terminus: Elongation factor Ts (274 aa).

The tract at residues Thr-79–Val-82 is involved in Mg(2+) ion dislocation from EF-Tu.

The protein belongs to the EF-Ts family.

It localises to the cytoplasm. Functionally, associates with the EF-Tu.GDP complex and induces the exchange of GDP to GTP. It remains bound to the aminoacyl-tRNA.EF-Tu.GTP complex up to the GTP hydrolysis stage on the ribosome. The polypeptide is Elongation factor Ts (Porphyromonas gingivalis (strain ATCC 33277 / DSM 20709 / CIP 103683 / JCM 12257 / NCTC 11834 / 2561)).